An 85-amino-acid polypeptide reads, in one-letter code: Beta-insect depressant toxin Lqh-dprIT3c (85 aa).

A signal peptide spans 1–21 (MKLLLLLTISASMLIEGLVNA). The region spanning 22 to 82 (DGYIRGGDGC…EWDYETNTCG (61 aa)) is the LCN-type CS-alpha/beta domain. 4 disulfides stabilise this stretch: cysteine 31–cysteine 81, cysteine 35–cysteine 56, cysteine 42–cysteine 63, and cysteine 46–cysteine 65. Glycine 82 is modified (glycine amide).

Belongs to the long (4 C-C) scorpion toxin superfamily. Sodium channel inhibitor family. Beta subfamily. As to expression, expressed by the venom gland.

Its subcellular location is the secreted. Its function is as follows. Depressant insect beta-toxins cause a transient contraction paralysis followed by a slow flaccid paralysis. They bind voltage-independently at site-4 of sodium channels (Nav) and block action potentials, primarily by depolarizing the axonal membrane and suppressing the sodium current. This depressant toxin is active only on insects. It is found in a relatively small amount in the venom, and its activity on insects is 10-fold higher compared to other known depressant toxins. This Leiurus hebraeus (Hebrew deathstalker scorpion) protein is Beta-insect depressant toxin Lqh-dprIT3c.